Reading from the N-terminus, the 89-residue chain is Small ribosomal subunit protein uS15 (89 aa).

The protein belongs to the universal ribosomal protein uS15 family. In terms of assembly, part of the 30S ribosomal subunit. Forms a bridge to the 50S subunit in the 70S ribosome, contacting the 23S rRNA.

Its function is as follows. One of the primary rRNA binding proteins, it binds directly to 16S rRNA where it helps nucleate assembly of the platform of the 30S subunit by binding and bridging several RNA helices of the 16S rRNA. In terms of biological role, forms an intersubunit bridge (bridge B4) with the 23S rRNA of the 50S subunit in the ribosome. This Burkholderia mallei (strain NCTC 10247) protein is Small ribosomal subunit protein uS15.